The primary structure comprises 797 residues: Probable DNA polymerase (797 aa).

Belongs to the DNA polymerase type-B family.

The protein resides in the mitochondrion. The enzyme catalyses DNA(n) + a 2'-deoxyribonucleoside 5'-triphosphate = DNA(n+1) + diphosphate. This is Probable DNA polymerase from Agaricus bitorquis (Pavement mushroom).